The following is a 397-amino-acid chain: Elongation factor Tu (397 aa).

Residues 10-206 (KPHVNIGTIG…AVDSYIPTPE (197 aa)) enclose the tr-type G domain. Residues 19-26 (GHVDHGKT) form a G1 region. 19 to 26 (GHVDHGKT) is a binding site for GTP. A Mg(2+)-binding site is contributed by threonine 26. A G2 region spans residues 60-64 (GITIN). Residues 81-84 (DCPG) are G3. Residues 81–85 (DCPGH) and 136–139 (NKAD) contribute to the GTP site. The tract at residues 136–139 (NKAD) is G4. A G5 region spans residues 174-176 (SAL).

It belongs to the TRAFAC class translation factor GTPase superfamily. Classic translation factor GTPase family. EF-Tu/EF-1A subfamily. Monomer.

It localises to the cytoplasm. The enzyme catalyses GTP + H2O = GDP + phosphate + H(+). Its function is as follows. GTP hydrolase that promotes the GTP-dependent binding of aminoacyl-tRNA to the A-site of ribosomes during protein biosynthesis. The sequence is that of Elongation factor Tu from Clostridium beijerinckii (strain ATCC 51743 / NCIMB 8052) (Clostridium acetobutylicum).